A 294-amino-acid polypeptide reads, in one-letter code: Thymidylate synthase (294 aa).

Residues Arg-31 and 156-157 each bind dUMP; that span reads RR. Residue Cys-176 is the Nucleophile of the active site. Residues 196–199, Asn-207, and 237–239 each bind dUMP; these read RSAD and HIY. Asp-199 is a (6R)-5,10-methylene-5,6,7,8-tetrahydrofolate binding site. Ala-293 serves as a coordination point for (6R)-5,10-methylene-5,6,7,8-tetrahydrofolate.

The protein belongs to the thymidylate synthase family. In terms of assembly, homodimer.

It carries out the reaction dUMP + (6R)-5,10-methylene-5,6,7,8-tetrahydrofolate = 7,8-dihydrofolate + dTMP. Its pathway is pyrimidine metabolism; dTTP biosynthesis. The protein is Thymidylate synthase (70) of Saimiri sciureus (Common squirrel monkey).